Consider the following 369-residue polypeptide: Anhydro-N-acetylmuramic acid kinase (369 aa).

Residue 12-19 (GTSMDGVD) coordinates ATP.

It belongs to the anhydro-N-acetylmuramic acid kinase family.

It catalyses the reaction 1,6-anhydro-N-acetyl-beta-muramate + ATP + H2O = N-acetyl-D-muramate 6-phosphate + ADP + H(+). It functions in the pathway amino-sugar metabolism; 1,6-anhydro-N-acetylmuramate degradation. It participates in cell wall biogenesis; peptidoglycan recycling. In terms of biological role, catalyzes the specific phosphorylation of 1,6-anhydro-N-acetylmuramic acid (anhMurNAc) with the simultaneous cleavage of the 1,6-anhydro ring, generating MurNAc-6-P. Is required for the utilization of anhMurNAc either imported from the medium or derived from its own cell wall murein, and thus plays a role in cell wall recycling. In Shewanella sp. (strain ANA-3), this protein is Anhydro-N-acetylmuramic acid kinase.